A 106-amino-acid chain; its full sequence is Nucleoid-associated protein XCV1128 (106 aa).

The disordered stretch occupies residues 81 to 106 (IDAESKDRMGSATAGMQLPPGMKLPF).

It belongs to the YbaB/EbfC family. In terms of assembly, homodimer.

The protein resides in the cytoplasm. The protein localises to the nucleoid. Functionally, binds to DNA and alters its conformation. May be involved in regulation of gene expression, nucleoid organization and DNA protection. The polypeptide is Nucleoid-associated protein XCV1128 (Xanthomonas euvesicatoria pv. vesicatoria (strain 85-10) (Xanthomonas campestris pv. vesicatoria)).